A 321-amino-acid chain; its full sequence is Cytochrome c biogenesis protein CcsA (321 aa).

A run of 7 helical transmembrane segments spans residues Ile9–Leu29, Gly44–Gly64, Leu68–Ile88, Met143–Ile163, Val225–Asn245, Thr259–His273, and Val288–Ile308.

This sequence belongs to the CcmF/CycK/Ccl1/NrfE/CcsA family. As to quaternary structure, may interact with Ccs1.

It is found in the plastid. Its subcellular location is the chloroplast thylakoid membrane. Required during biogenesis of c-type cytochromes (cytochrome c6 and cytochrome f) at the step of heme attachment. The chain is Cytochrome c biogenesis protein CcsA from Saccharum hybrid (Sugarcane).